The following is a 671-amino-acid chain: UvrABC system protein B (671 aa).

In terms of domain architecture, Helicase ATP-binding spans Glu-25 to Arg-412. Residue Gly-38 to Thr-45 participates in ATP binding. The Beta-hairpin signature appears at Tyr-91–Ile-114. Positions Gln-429–Ile-582 constitute a Helicase C-terminal domain. A UVR domain is found at Thr-632–Arg-667.

This sequence belongs to the UvrB family. As to quaternary structure, forms a heterotetramer with UvrA during the search for lesions. Interacts with UvrC in an incision complex.

The protein resides in the cytoplasm. Its function is as follows. The UvrABC repair system catalyzes the recognition and processing of DNA lesions. A damage recognition complex composed of 2 UvrA and 2 UvrB subunits scans DNA for abnormalities. Upon binding of the UvrA(2)B(2) complex to a putative damaged site, the DNA wraps around one UvrB monomer. DNA wrap is dependent on ATP binding by UvrB and probably causes local melting of the DNA helix, facilitating insertion of UvrB beta-hairpin between the DNA strands. Then UvrB probes one DNA strand for the presence of a lesion. If a lesion is found the UvrA subunits dissociate and the UvrB-DNA preincision complex is formed. This complex is subsequently bound by UvrC and the second UvrB is released. If no lesion is found, the DNA wraps around the other UvrB subunit that will check the other stand for damage. The chain is UvrABC system protein B from Pseudomonas putida (strain ATCC 47054 / DSM 6125 / CFBP 8728 / NCIMB 11950 / KT2440).